The chain runs to 208 residues: Large ribosomal subunit protein uL3 (208 aa).

Residues 117–147 (FQGVIKRHGQSRGPMAHGSRYHRRPGSMGPV) form a disordered region.

It belongs to the universal ribosomal protein uL3 family. In terms of assembly, part of the 50S ribosomal subunit. Forms a cluster with proteins L14 and L19.

One of the primary rRNA binding proteins, it binds directly near the 3'-end of the 23S rRNA, where it nucleates assembly of the 50S subunit. This chain is Large ribosomal subunit protein uL3, found in Streptococcus equi subsp. zooepidemicus (strain H70).